The sequence spans 549 residues: NADH-quinone oxidoreductase subunit N (549 aa).

14 helical membrane-spanning segments follow: residues 26 to 46 (LSPL…EAFV), 57 to 77 (ALAM…VGAL), 96 to 116 (PSLF…LLIA), 148 to 168 (HTEV…FTAA), 171 to 191 (FLTM…LCGL), 206 to 226 (YFLL…MVYG), 253 to 273 (LLIG…TVPF), 297 to 317 (LVAA…TTVA), 321 to 341 (PMLW…AVTQ), 347 to 367 (LLAY…VAAN), 375 to 395 (MFYL…VTLV), 421 to 441 (AASL…SGFI), 466 to 486 (SAVT…AEPA), and 496 to 516 (GILT…LGIL).

This sequence belongs to the complex I subunit 2 family. As to quaternary structure, NDH-1 is composed of 14 different subunits. Subunits NuoA, H, J, K, L, M, N constitute the membrane sector of the complex.

It localises to the cell membrane. The enzyme catalyses a quinone + NADH + 5 H(+)(in) = a quinol + NAD(+) + 4 H(+)(out). Functionally, NDH-1 shuttles electrons from NADH, via FMN and iron-sulfur (Fe-S) centers, to quinones in the respiratory chain. The immediate electron acceptor for the enzyme in this species is believed to be a menaquinone. Couples the redox reaction to proton translocation (for every two electrons transferred, four hydrogen ions are translocated across the cytoplasmic membrane), and thus conserves the redox energy in a proton gradient. The polypeptide is NADH-quinone oxidoreductase subunit N (Thermobifida fusca (strain YX)).